Consider the following 88-residue polypeptide: Small ribosomal subunit protein bS20 (88 aa).

Belongs to the bacterial ribosomal protein bS20 family.

Its function is as follows. Binds directly to 16S ribosomal RNA. The sequence is that of Small ribosomal subunit protein bS20 from Clostridium botulinum (strain 657 / Type Ba4).